Here is a 145-residue protein sequence, read N- to C-terminus: 3-hydroxyacyl-[acyl-carrier-protein] dehydratase FabZ (145 aa).

Histidine 52 is an active-site residue.

This sequence belongs to the thioester dehydratase family. FabZ subfamily.

The protein localises to the cytoplasm. The catalysed reaction is a (3R)-hydroxyacyl-[ACP] = a (2E)-enoyl-[ACP] + H2O. Its function is as follows. Involved in unsaturated fatty acids biosynthesis. Catalyzes the dehydration of short chain beta-hydroxyacyl-ACPs and long chain saturated and unsaturated beta-hydroxyacyl-ACPs. The sequence is that of 3-hydroxyacyl-[acyl-carrier-protein] dehydratase FabZ from Deinococcus radiodurans (strain ATCC 13939 / DSM 20539 / JCM 16871 / CCUG 27074 / LMG 4051 / NBRC 15346 / NCIMB 9279 / VKM B-1422 / R1).